Consider the following 448-residue polypeptide: Chromosomal replication initiator protein DnaA (448 aa).

The tract at residues 1 to 72 (MPDLQELWNY…VEGAYEFAEI (72 aa)) is domain I, interacts with DnaA modulators. A domain II region spans residues 72–110 (IELTPIFVLPGESDNLTPLEPEEEHVLTKAETPTFLRET). Residues 111–327 (HLNSKYTFDT…GALVRVQAYA (217 aa)) form a domain III, AAA+ region region. ATP-binding residues include Gly-155, Gly-157, Lys-158, and Thr-159. The segment at 328 to 448 (TMQNAEITTS…ILDLKNTMKS (121 aa)) is domain IV, binds dsDNA.

It belongs to the DnaA family. As to quaternary structure, oligomerizes as a right-handed, spiral filament on DNA at oriC.

It is found in the cytoplasm. In terms of biological role, plays an essential role in the initiation and regulation of chromosomal replication. ATP-DnaA binds to the origin of replication (oriC) to initiate formation of the DNA replication initiation complex once per cell cycle. Binds the DnaA box (a 9 base pair repeat at the origin) and separates the double-stranded (ds)DNA. Forms a right-handed helical filament on oriC DNA; dsDNA binds to the exterior of the filament while single-stranded (ss)DNA is stabiized in the filament's interior. The ATP-DnaA-oriC complex binds and stabilizes one strand of the AT-rich DNA unwinding element (DUE), permitting loading of DNA polymerase. After initiation quickly degrades to an ADP-DnaA complex that is not apt for DNA replication. Binds acidic phospholipids. This is Chromosomal replication initiator protein DnaA from Latilactobacillus sakei subsp. sakei (strain 23K) (Lactobacillus sakei subsp. sakei).